The sequence spans 226 residues: Fibrillarin-like rRNA/tRNA 2'-O-methyltransferase (226 aa).

S-adenosyl-L-methionine is bound by residues 85-86 (TT), 104-105 (EF), 129-130 (DA), and 149-152 (DVAQ).

It belongs to the methyltransferase superfamily. Fibrillarin family. As to quaternary structure, interacts with nop5. Component of box C/D small ribonucleoprotein (sRNP) particles that contain rpl7ae, FlpA and nop5, plus a guide RNA.

Involved in pre-rRNA and tRNA processing. Utilizes the methyl donor S-adenosyl-L-methionine to catalyze the site-specific 2'-hydroxyl methylation of ribose moieties in rRNA and tRNA. Site specificity is provided by a guide RNA that base pairs with the substrate. Methylation occurs at a characteristic distance from the sequence involved in base pairing with the guide RNA. The protein is Fibrillarin-like rRNA/tRNA 2'-O-methyltransferase of Thermococcus gammatolerans (strain DSM 15229 / JCM 11827 / EJ3).